The primary structure comprises 423 residues: Acetylornithine aminotransferase, mitochondrial (423 aa).

K276 carries the N6-(pyridoxal phosphate)lysine modification.

The protein belongs to the class-III pyridoxal-phosphate-dependent aminotransferase family. Pyridoxal 5'-phosphate is required as a cofactor.

The protein localises to the mitochondrion matrix. It catalyses the reaction N(2)-acetyl-L-ornithine + 2-oxoglutarate = N-acetyl-L-glutamate 5-semialdehyde + L-glutamate. Its pathway is amino-acid biosynthesis; L-arginine biosynthesis; N(2)-acetyl-L-ornithine from L-glutamate: step 4/4. The polypeptide is Acetylornithine aminotransferase, mitochondrial (ARG8) (Eremothecium gossypii (strain ATCC 10895 / CBS 109.51 / FGSC 9923 / NRRL Y-1056) (Yeast)).